A 124-amino-acid polypeptide reads, in one-letter code: Aspartate 1-decarboxylase (124 aa).

Residue S25 is the Schiff-base intermediate with substrate; via pyruvic acid of the active site. S25 is modified (pyruvic acid (Ser)). Residue T57 coordinates substrate. Y58 functions as the Proton donor in the catalytic mechanism. 73-75 serves as a coordination point for substrate; that stretch reads GAA.

This sequence belongs to the PanD family. Heterooctamer of four alpha and four beta subunits. Pyruvate serves as cofactor. Post-translationally, is synthesized initially as an inactive proenzyme, which is activated by self-cleavage at a specific serine bond to produce a beta-subunit with a hydroxyl group at its C-terminus and an alpha-subunit with a pyruvoyl group at its N-terminus.

The protein resides in the cytoplasm. It carries out the reaction L-aspartate + H(+) = beta-alanine + CO2. Its pathway is cofactor biosynthesis; (R)-pantothenate biosynthesis; beta-alanine from L-aspartate: step 1/1. Its function is as follows. Catalyzes the pyruvoyl-dependent decarboxylation of aspartate to produce beta-alanine. This is Aspartate 1-decarboxylase from Clostridium botulinum (strain Alaska E43 / Type E3).